The primary structure comprises 118 residues: Large ribosomal subunit protein eL18 (118 aa).

This sequence belongs to the eukaryotic ribosomal protein eL18 family.

This is Large ribosomal subunit protein eL18 (rpl18e) from Sulfolobus acidocaldarius (strain ATCC 33909 / DSM 639 / JCM 8929 / NBRC 15157 / NCIMB 11770).